Reading from the N-terminus, the 82-residue chain is MQIFNMVSLVALFALGATAVPVSSITGVQCCQANHGDLTTPQAQSLFKSHQKRQDYWVCHACNKQFTTPAALQKHKDTVVHP.

Positions Met1 to Ala19 are cleaved as a signal peptide. The C2H2-type zinc finger occupies Trp57–His81.

The protein localises to the secreted. It is found in the host nucleus. Its function is as follows. Probable secreted effector that translocates into the nuclei of host cells to reprogram the expression of targeted genes by binding on effector binding elements in rice. This is Host transcription reprogramming factor 10 from Pyricularia oryzae (strain 70-15 / ATCC MYA-4617 / FGSC 8958) (Rice blast fungus).